An 81-amino-acid chain; its full sequence is Large ribosomal subunit protein bL27 (81 aa).

Polar residues predominate over residues 1–11; the sequence is MATSKSGGSSK. Residues 1–23 are disordered; it reads MATSKSGGSSKNGRDSISKRLGV.

It belongs to the bacterial ribosomal protein bL27 family.

The polypeptide is Large ribosomal subunit protein bL27 (Borrelia garinii subsp. bavariensis (strain ATCC BAA-2496 / DSM 23469 / PBi) (Borreliella bavariensis)).